We begin with the raw amino-acid sequence, 397 residues long: Protein Brevis radix-like 1 (397 aa).

Disordered stretches follow at residues 14-37 and 105-148; these read GAPP…AGEC and RAGS…EDDE. Residues 124-148 are compositionally biased toward acidic residues; that stretch reads AGDEEEEEEEEEEEGTTADGSEDDE. Residues 150 to 205 form the BRX 1 domain; the sequence is KEWVAQVEPGVLITFLSLPEGGNDLKRIRFSREIFNKWQAQRWWAENYEKVMELYN. 2 disordered regions span residues 212–278 and 300–342; these read QTPL…QQHH and SISG…DQER. Over residues 220–230 the composition is skewed to basic and acidic residues; sequence KSEDESLKEDI. Residues 309–320 are compositionally biased toward low complexity; it reads SSMDASMRSSSS. The region spanning 342-397 is the BRX 2 domain; the sequence is REWVEEDEPGVYITIRALPGGIRELRRVRFSREKFSEMHARLWWEENRARIHDQYL.

This sequence belongs to the BRX family.

Its subcellular location is the nucleus. This chain is Protein Brevis radix-like 1 (BRXL1), found in Oryza sativa subsp. japonica (Rice).